The primary structure comprises 442 residues: MAKTLISSPSFLGTPLPSLHRTFSPNRTRLFTKVQFSFHQLPPIQSVSHSVDLSGIFARAEGLLYTLADATVAADAAASTDVAAQKNGGWFGFISDGMEFVLKVLKDGLSSVHVPYSYGFAIILLTVIVKAATLPLTKQQVESTLAMQNLQPKIKAIQERYAGNQERIQLETSRLYTQAGVNPLAGCLPTLATIPVWIGLYQALSNVANEGLLTEGFLWIPSLGGPTSIAARQSGSGISWLFPFVDGHPLLGWYDTAAYLVLPVLLIVSQYVSMEIMKPPQTNDPNQKNTLLIFKFLPLMIGYFSLSVPSGLTIYWFTNNVLSTAQQVWLRKLGGAKPAVNENAGGIITAGQAKRSASKPEKGGERFRQLKEEEKKKKLIKALPVEEVQPLASASASNDGSDVENNKEQEVTEESNTSKVSQEVQSFSRERRSKRSKRKPVA.

Over 1-108 (MAKTLISSPS…EFVLKVLKDG (108 aa)) the chain is Lumenal. Residues 109–129 (LSSVHVPYSYGFAIILLTVIV) traverse the membrane as a helical segment. Over 130 to 183 (KAATLPLTKQQVESTLAMQNLQPKIKAIQERYAGNQERIQLETSRLYTQAGVNP) the chain is Stromal. The chain crosses the membrane as a helical span at residues 184–204 (LAGCLPTLATIPVWIGLYQAL). The Lumenal portion of the chain corresponds to 205-296 (SNVANEGLLT…QKNTLLIFKF (92 aa)). Residues 297–317 (LPLMIGYFSLSVPSGLTIYWF) form a helical membrane-spanning segment. Residues 318–442 (TNNVLSTAQQ…SKRSKRKPVA (125 aa)) are Stromal-facing. 2 disordered regions span residues 350–371 (AGQAKRSASKPEKGGERFRQLK) and 390–442 (PLAS…KPVA). Basic and acidic residues predominate over residues 358–371 (SKPEKGGERFRQLK). A compositionally biased stretch (polar residues) spans 414-427 (ESNTSKVSQEVQSF). Over residues 431 to 442 (RRSKRSKRKPVA) the composition is skewed to basic residues.

Belongs to the OXA1/ALB3/YidC (TC 2.A.9.2) family. As to expression, highly expressed in apical buds. Low levels of expression in leaves. Not expressed in roots, and stems.

It is found in the plastid. The protein resides in the chloroplast thylakoid membrane. In terms of biological role, may be required for the insertion of some integral membrane proteins into the chloroplast thylakoid membrane. May play a role in inhibiting senescence. In Pisum sativum (Garden pea), this protein is Inner membrane protein PPF-1, chloroplastic (PPF-1).